The sequence spans 174 residues: Shikimate kinase 2 (174 aa).

12 to 17 is an ATP binding site; it reads GCGKTT. Thr16 and Asp32 together coordinate Mg(2+). Substrate is bound by residues Asp34, Arg58, and Gly79. The segment at 112-126 is LID domain; that stretch reads QAAPEEDLRPTLTGK. Arg120 contributes to the ATP binding site. Arg139 serves as a coordination point for substrate.

It belongs to the shikimate kinase family. AroL subfamily. In terms of assembly, monomer. Requires Mg(2+) as cofactor.

It localises to the cytoplasm. The enzyme catalyses shikimate + ATP = 3-phosphoshikimate + ADP + H(+). Its pathway is metabolic intermediate biosynthesis; chorismate biosynthesis; chorismate from D-erythrose 4-phosphate and phosphoenolpyruvate: step 5/7. In terms of biological role, catalyzes the specific phosphorylation of the 3-hydroxyl group of shikimic acid using ATP as a cosubstrate. In Escherichia coli O1:K1 / APEC, this protein is Shikimate kinase 2.